Reading from the N-terminus, the 314-residue chain is Secreted frizzled-related protein 1 (314 aa).

Residues M1 to A31 form the signal peptide. Positions T53 to M169 constitute an FZ domain. 5 disulfide bridges follow: C58/C121, C68/C114, C105/C140, C129/C166, and C133/C157. N-linked (GlcNAc...) asparagine glycosylation is present at N173. 3 disulfides stabilise this stretch: C186–C256, C189–C258, and C203–C306. In terms of domain architecture, NTR spans C186 to C306.

The protein belongs to the secreted frizzled-related protein (sFRP) family. Interacts with WNT1, WNT2 and FRZD6. Interacts with WNT4, WNT8 and MYOC. Widely expressed. Absent from lung, liver and peripheral blood leukocytes. Highest levels in heart and fetal kidney. Also expressed in testis, ovary, fetal brain and lung, leiomyomal cells, myometrial cells and vascular smooth muscle cells. Expressed in foreskin fibroblasts and in keratinocytes.

The protein localises to the secreted. Functionally, soluble frizzled-related proteins (sFRPS) function as modulators of Wnt signaling through direct interaction with Wnts. They have a role in regulating cell growth and differentiation in specific cell types. SFRP1 decreases intracellular beta-catenin levels. Has antiproliferative effects on vascular cells, in vitro and in vivo, and can induce, in vivo, an angiogenic response. In vascular cell cycle, delays the G1 phase and entry into the S phase. In kidney development, inhibits tubule formation and bud growth in metanephroi. Inhibits WNT1/WNT4-mediated TCF-dependent transcription. This Homo sapiens (Human) protein is Secreted frizzled-related protein 1 (SFRP1).